The chain runs to 230 residues: MLLHIPTILSRTQATSMQERLAAANWTDGRETVGPQGAQVKHNLQLPETSPLRQELGHEILDALARSPLYFAATLPLRTLPPRFNRYQENHQYGFHVDGAVMSLPVAPDHTPASLRSDISCTLFLNDPDEYEGGELIIADTYGEHEIKLPAGDLIIYPSTSLHRVAPVTRGMRIASFFWVQSLVRQATHRHQLLELDTAIQSLTASNTDHNTILRLTNIYHNLLREWSET.

The 105-residue stretch at 78 to 182 (RTLPPRFNRY…RIASFFWVQS (105 aa)) folds into the Fe2OG dioxygenase domain. Positions 96, 98, and 163 each coordinate Fe cation. Residue Arg-173 coordinates 2-oxoglutarate.

It depends on Fe(2+) as a cofactor. Requires L-ascorbate as cofactor.

The chain is PKHD-type hydroxylase Xfasm12_1709 from Xylella fastidiosa (strain M12).